The following is a 370-amino-acid chain: MFRQSVRRFATAALRSAAESPYNVRVSQAQGFVNGLTEAIGNTPLIRLKRLSEETGSNILAKAEFQNPGGSVKDRAALYVVKDAEERGLLKPGGTVVEGTAGNTGIGLAHVCRSKGYKLVIYMPNTQSQGKIDLLRLLGAEVYPVPAVAFDNPENYNHKARRHAESLDNAVWTNQFDNTANRRAHIETTGPEIWAQTGGKLDAFTCSTGTGGTLAGITYYLKQASGGRVKSFLADPPGSVLHSYIQSGGKLVERSGSSITEGIGQGRITDNLQPDVGTLDGSLNISDEKTIEMIYRCLDEEGLYLGASSALNVVAAKEVAEKLGKGSTVVTILADGAYRYADRLFSKSWLESKGLRNAIPKHLEKYIVLP.

The transit peptide at 1-16 (MFRQSVRRFATAALRS) directs the protein to the mitochondrion. N6-(pyridoxal phosphate)lysine is present on Lys-73. Pyridoxal 5'-phosphate contacts are provided by residues Asn-103, 209-213 (GTGGT), and Ser-308.

The protein belongs to the cysteine synthase/cystathionine beta-synthase family. The cofactor is pyridoxal 5'-phosphate.

It is found in the mitochondrion. The enzyme catalyses O-succinyl-L-serine + hydrogen sulfide = L-cysteine + succinate. It catalyses the reaction O-acetyl-L-serine + hydrogen sulfide = L-cysteine + acetate. It participates in amino-acid biosynthesis; L-cysteine biosynthesis; L-cysteine from L-serine: step 2/2. In terms of biological role, catalyzes the conversion of O-succinyl-L-serine into cysteine, the last step in the cysteine biosynthesis pathway. Can also use O-acetyl-L-serine. This Emericella nidulans (strain FGSC A4 / ATCC 38163 / CBS 112.46 / NRRL 194 / M139) (Aspergillus nidulans) protein is Cysteine synthase 1.